The chain runs to 510 residues: Ribonuclease Y (510 aa).

The helical transmembrane segment at 4 to 24 threads the bilayer; sequence LLWAVVALLAGLAGGAGIGVY. Positions 200-260 constitute a KH domain; it reads TVSTVNLPSE…VRREVARVAL (61 aa). Residues 326 to 419 enclose the HD domain; that stretch reads VLQHSLECAL…VIAADAISGA (94 aa).

This sequence belongs to the RNase Y family.

It localises to the cell membrane. Its function is as follows. Endoribonuclease that initiates mRNA decay. The protein is Ribonuclease Y of Chloroflexus aurantiacus (strain ATCC 29366 / DSM 635 / J-10-fl).